The following is a 313-amino-acid chain: NADH-ubiquinone oxidoreductase chain 1 (313 aa).

8 consecutive transmembrane segments (helical) span residues 7–27 (LIGS…LTLL), 73–93 (IFYY…WMSM), 104–124 (LGVL…MVAG), 150–170 (LALI…LNFF), 175–195 (YMWF…SCLA), 226–246 (LIFL…SVIF), 250–270 (DIYS…FIWV), and 293–313 (MSLN…SMLF).

Belongs to the complex I subunit 1 family.

The protein resides in the mitochondrion inner membrane. The enzyme catalyses a ubiquinone + NADH + 5 H(+)(in) = a ubiquinol + NAD(+) + 4 H(+)(out). Core subunit of the mitochondrial membrane respiratory chain NADH dehydrogenase (Complex I) that is believed to belong to the minimal assembly required for catalysis. Complex I functions in the transfer of electrons from NADH to the respiratory chain. The immediate electron acceptor for the enzyme is believed to be ubiquinone. This is NADH-ubiquinone oxidoreductase chain 1 from Aedes aegypti (Yellowfever mosquito).